The primary structure comprises 422 residues: UDP-N-acetylglucosamine 1-carboxyvinyltransferase (422 aa).

Residue 22-23 (KN) coordinates phosphoenolpyruvate. Arginine 93 lines the UDP-N-acetyl-alpha-D-glucosamine pocket. Cysteine 117 functions as the Proton donor in the catalytic mechanism. At cysteine 117 the chain carries 2-(S-cysteinyl)pyruvic acid O-phosphothioketal. Residues 122–126 (RPVDQ), aspartate 309, and isoleucine 331 each bind UDP-N-acetyl-alpha-D-glucosamine.

The protein belongs to the EPSP synthase family. MurA subfamily.

The protein localises to the cytoplasm. It carries out the reaction phosphoenolpyruvate + UDP-N-acetyl-alpha-D-glucosamine = UDP-N-acetyl-3-O-(1-carboxyvinyl)-alpha-D-glucosamine + phosphate. The protein operates within cell wall biogenesis; peptidoglycan biosynthesis. Its function is as follows. Cell wall formation. Adds enolpyruvyl to UDP-N-acetylglucosamine. The polypeptide is UDP-N-acetylglucosamine 1-carboxyvinyltransferase (Delftia acidovorans (strain DSM 14801 / SPH-1)).